Here is a 235-residue protein sequence, read N- to C-terminus: Phosphoribosylaminoimidazole-succinocarboxamide synthase (235 aa).

Belongs to the SAICAR synthetase family.

It catalyses the reaction 5-amino-1-(5-phospho-D-ribosyl)imidazole-4-carboxylate + L-aspartate + ATP = (2S)-2-[5-amino-1-(5-phospho-beta-D-ribosyl)imidazole-4-carboxamido]succinate + ADP + phosphate + 2 H(+). It participates in purine metabolism; IMP biosynthesis via de novo pathway; 5-amino-1-(5-phospho-D-ribosyl)imidazole-4-carboxamide from 5-amino-1-(5-phospho-D-ribosyl)imidazole-4-carboxylate: step 1/2. This Clostridium botulinum (strain Alaska E43 / Type E3) protein is Phosphoribosylaminoimidazole-succinocarboxamide synthase.